The chain runs to 910 residues: MEEEPYKRKLTKAEKKAKYRTDYAEPLKSRREVLKAIMNGPESERERKVRAKNREFFNEDYRSGVNIYGMAVDMMKAMPDRGKTSGQSLAVWYLEDFGVWLKESGQETELRQKYLTGTIQINALDVCTIGQKQLLSEIFDITKEKFTEDITQLLDAAIKKQDFSVAADMAIQYNLLRDHHFEHLVLPLMLSGKDQTAYKLISNNERMQQQLVEFFDRMVGISVVAVEEMLKPYKETKIMTIPMEKLTGKTLDKLISTIINKNTHEYNFSRELSKFAKNHSQNGNLKALKFNISERYEKGKSDDNYFQHMVETFTKAEDVREPILFYLWSSNDTEKQIDAICFAIYLGIASSSSYQLPNVMRDFFRQPDSKLREAKELLVRRKTLQVPLNGEQLFVFENERRTQIHMVKTESEMNYLCSEIKSLSDEPAPVYVGFDSEWKPSNLTAVHDSKIAIIQLFFKNCVWLVDCVELEKANMADDWWQKFASRLFGDSPVKVVGFDMRNDLDAMATIPALKSSMKIEDTKNAFDLKRLAENVCDIDMEILELPKKTFKLADLTHYLLGLELDKTEQCSNWQCRPLRKKQIVYAALDAVVVVETFKKILSIVEEKNKDADIEKIVRESNVMAPKKDKGHKSYRKLKTIPWLELYDILRSHRNPTRSPQRPHDIKVIVDTMLIGFGKNLRRVGIDVILPKDVSDFRKYLKEIERVGGEHLRHIITVPSKSYEALKMDYDNYTIAIPELNNMSPVDQLIEFFDLFNVDIRPEDVYPRCTECNSRLQIKFPGPVLHFLHQYCVIHVQNVYRADMSEFPLEEWWNRMLHINPDDYDGVKVEMSRPSPTSKWIVATVPTGCLHITRQTALHTNLPDGIEVRIHKVPDDEFKRRNLSFYVCGECGTVACDGRGNQASESTSQEC.

Residues 404 to 605 (IHMVKTESEM…TFKKILSIVE (202 aa)) enclose the 3'-5' exonuclease domain.

Belongs to the mut-7 family. It depends on Mg(2+) as a cofactor.

Represses the transposition of Tc1, Tc3, Tc4, and Tc5, perhaps by degrading transposon-specific messages. Also affects sperm development, sensitivity to RNAi of mainly germline expressed genes, silencing of some germline transgenes, X chromosome loss, and is required for cosuppression (functional silencing of chromosomal loci induced by transgenes) and for silencing induced by antisense RNA oligomers. This is Exonuclease mut-7 (mut-7) from Caenorhabditis elegans.